We begin with the raw amino-acid sequence, 312 residues long: Methionyl-tRNA formyltransferase (312 aa).

A disordered region spans residues 34–54 (PDAASGRRGKPQPSPVAREAA). 110–113 (SLLP) is a binding site for (6S)-5,6,7,8-tetrahydrofolate.

This sequence belongs to the Fmt family.

The enzyme catalyses L-methionyl-tRNA(fMet) + (6R)-10-formyltetrahydrofolate = N-formyl-L-methionyl-tRNA(fMet) + (6S)-5,6,7,8-tetrahydrofolate + H(+). Its function is as follows. Attaches a formyl group to the free amino group of methionyl-tRNA(fMet). The formyl group appears to play a dual role in the initiator identity of N-formylmethionyl-tRNA by promoting its recognition by IF2 and preventing the misappropriation of this tRNA by the elongation apparatus. This chain is Methionyl-tRNA formyltransferase, found in Mycobacterium tuberculosis (strain ATCC 25177 / H37Ra).